The primary structure comprises 219 residues: Ran-specific GTPase-activating protein 1 (219 aa).

Composition is skewed to basic and acidic residues over residues 1–12 (MAEVERKEEQAK), 33–45 (AVGD…EAKK), and 57–72 (PRKD…DNID). The disordered stretch occupies residues 1–72 (MAEVERKEEQ…KGGEERDNID (72 aa)). One can recognise a RanBD1 domain in the interval 70–210 (NIDAAEVVEK…YDLGRAHNEK (141 aa)).

It belongs to the RANBP1 family.

The protein localises to the cytoplasm. The protein resides in the nucleus. In terms of biological role, important for the export of protein containing nuclear export signal (NES) out of the nucleus. This chain is Ran-specific GTPase-activating protein 1 (YRB1), found in Encephalitozoon cuniculi (strain GB-M1) (Microsporidian parasite).